Reading from the N-terminus, the 1174-residue chain is MKALMVRTDFSLGESALKAENAVKIARDAGYTAVISADSMNIASVIPLQRAAGDDMAVICGVKLNVVDDPTYEHRARLAKESERCMESLVRDRSYCFTALIKNEQGYRDVCELMTLANKREQFYFVPRLALDQLAAAYAKGNIILLTSDIGSVFQRRDFAKIIGTLVTAGGRDNFYSVVYPHPTPFYDQINVRAMKVASALKIEPVAFYPAYYEAVDDADIKDIAHMVTNNIKIDQPHRLRIPHQRDNAVNGRRHLLEALKAFSVRMDVPVTAAMASTTQDTIIEACTWRWHELPPALPKMADDEPATLMKLAVAGLRKRLTTKEFGYTPPASEHRVYVDRLKYEMDTLTRLGFCGYFLMVRDLMNHSRETGIPVGPGRGSSAGSLVAWCIGITNVDPIRHGLLFERFINPERLDLPDADLDFSQARRHEVIEYLNERYGEDYVAGIPNFTYLGAASALRDTARIYGVDAADMAVSKEFKNLEDDSLSLEELREQLASLDKYATKYPEAFKAACKLQSLMRGFGRHAAGMIVAGVPLVERTPVELRGNARCIAFDKRYCEAMGLIKLDVLGLATLDLLDSAKRYIKESTGEDINLDAIPLDDRKVLDGFAAGYTQGVFQLESGPMRKLLKDLGGGIEPMSFKTVVATTALFRPGPIQSGMLDDYVSVAKGFMAPQSLHPVLDELTAETNGVILYQEQTMNATRLLAGFTMAEADGVRKAIGKKDMEKMKSMGEKFVVQAQAGWIDVEMEDGTTQRIHRAEHFKCEDGALRTVEEALEAGVKLPMAAVRVTGSQPGLSETKAKEIWDAFEKNGAYQFNKSHPVAYSLISYQSMWLKTHYPAEFFAAALTILGEDKHQGLVKDALTYGIHVLPPDVNVSSNRIEIRTLEDGSQVLYAPFSAVKGCSENGCQAIMRAREKVGGKFESLEQFEEAVEKRACACNSRVRESLQKVGAFASIEPGSLPATDPERLRDQAELMGNLVIDAVKASRPFEMNPKRSAEVNVLMTRMAAEMGLGDDLIRPSIGIKPKIMVILDNANGNDGRTGYFMENGYDDFKAKLLTAGDLRMGDLYVTGVCKKVKDKEKDYTKDEIGQFTDFMREEINLVRPTYVLTCGSRATSLFNNKSKPSDLVGRKEYLPELDVTVFYGFNPNILYFRPEEGEKLEAILAEVAETISK.

It belongs to the DNA polymerase type-C family. DnaE subfamily. DNA polymerase III contains a core (composed of alpha, epsilon and theta chains) that associates with a tau subunit. This core dimerizes to form the PolIII' complex. PolIII' associates with the gamma complex (composed of gamma, delta, delta', psi and chi chains) and with the beta chain to form the complete DNA polymerase III complex.

It is found in the cytoplasm. It carries out the reaction DNA(n) + a 2'-deoxyribonucleoside 5'-triphosphate = DNA(n+1) + diphosphate. DNA polymerase III is a complex, multichain enzyme responsible for most of the replicative synthesis in bacteria. This DNA polymerase also exhibits 3' to 5' exonuclease activity. The alpha chain is the DNA polymerase. The sequence is that of DNA polymerase III subunit alpha (dnaE) from Yersinia pestis.